The following is a 410-amino-acid chain: Lipid droplet-regulating VLDL assembly factor AUP1 (410 aa).

The residue at position 1 (methionine 1) is an N-acetylmethionine. Topologically, residues 1–20 (MEPPPAPGPERLFDSHRLPS) are cytoplasmic. The stretch at 21–41 (DGFLLLALLLYAPVGLCLLVL) is an intramembrane region. The Cytoplasmic portion of the chain corresponds to 42 to 410 (RLFLGLHVFL…FRERQAQEAE (369 aa)). Residues 259-293 (LTPADKAEHMKRQRHPRLRPQSVQSSFPSPPSPSS) form a disordered region. Phosphoserine is present on serine 292. A CUE domain is found at 296 to 338 (QLTILAQRVKEVLPHVPLNVIQRDLARTGCVDLTITNLLEGAV). The disordered stretch occupies residues 348–367 (GSQSLPTASAPKFPSSGLVT). At serine 363 the chain carries Phosphoserine. Threonine 367 bears the Phosphothreonine mark.

Belongs to the AUP1 family. As to quaternary structure, identified in a complex that contains SEL1L, OS9, FAF2/UBXD8, UBE2J1/UBC6E and AUP1. Interacts with the cytoplasmic tail of ITGA2B, ITGA1, ITGA2, ITGA5, ITGAV and ITGAM. Interacts (via C-terminus) with UBE2G2; the interaction recruits UBE2G2 to lipid droplets. Interacts with ubiquitin ligases AMFR/gp78 and RNF139/TRC8; this promotes interaction of UBE2G2 with AMFR and RNF139. Interacts with apolipoprotein APOB. Post-translationally, monoubiquitinated and diubiquitinated.

Its subcellular location is the endoplasmic reticulum membrane. It is found in the lipid droplet. Plays a role in the translocation of terminally misfolded proteins from the endoplasmic reticulum lumen to the cytoplasm and their degradation by the proteasome. Plays a role in lipid droplet formation. Induces lipid droplet clustering. Recruits ubiquitin-conjugating enzyme UBE2G2 to lipid droplets which facilitates its interaction with ubiquitin ligases AMFR/gp78 and RNF139/TRC8, leading to sterol-induced ubiquitination of HMGCR and its subsequent proteasomal degradation. Also required for the degradation of INSIG1, SREBF1 and SREBF2. Plays a role in regulating assembly and secretion of very low density lipoprotein particles and stability of apolipoprotein APOB. In Rattus norvegicus (Rat), this protein is Lipid droplet-regulating VLDL assembly factor AUP1.